The chain runs to 118 residues: Holin-like protein CidA 2 (118 aa).

Helical transmembrane passes span Val-4 to Val-26, Gly-33 to Leu-52, Leu-62 to Leu-84, and Ile-91 to Leu-113.

The protein belongs to the CidA/LrgA family. CidA subfamily.

It localises to the cell membrane. Functionally, increases the activity of extracellular murein hydrolases possibly by mediating their export via hole formation. Inhibited by the antiholin-like proteins LrgAB. In an unstressed cell, the LrgAB products probably inhibit the function of the CidA protein. When a cell is stressed by the addition of antibiotics or by other factors in the environment, CidA possibly oligomerizes within the bacterial cell membrane, creating lesions that disrupt the proton motive force, which in turn results in loss of cell viability. These lesions are also hypothesized to regulate the subsequent cell lysis by either allowing the murein hydrolases access to the cell wall substrate and/or regulating their activity by a possible change in the cell wall pH that results from loss of membrane potential. This chain is Holin-like protein CidA 2 (cidA2), found in Bacillus cereus (strain ATCC 14579 / DSM 31 / CCUG 7414 / JCM 2152 / NBRC 15305 / NCIMB 9373 / NCTC 2599 / NRRL B-3711).